A 330-amino-acid chain; its full sequence is Complement factor H-related protein 3 (330 aa).

A signal peptide spans 1–18; it reads MLLLINVILTLWVSCANG. Sushi domains lie at 22-84, 85-142, 144-205, 208-266, and 267-330; these read PCDF…VPCL, RKCY…RCIR, RTCS…ICIN, EKCG…RCIH, and PCII…PRCE. 6 disulfides stabilise this stretch: Cys-23–Cys-72, Cys-55–Cys-83, Cys-87–Cys-129, Cys-114–Cys-140, Cys-146–Cys-192, and Cys-175–Cys-203. The N-linked (GlcNAc...) asparagine glycan is linked to Asn-108. N-linked (GlcNAc...) asparagine glycosylation is found at Asn-185 and Asn-205. Intrachain disulfides connect Cys-210–Cys-253, Cys-239–Cys-264, Cys-268–Cys-319, and Cys-302–Cys-329. N-linked (GlcNAc...) asparagine glycosylation is present at Asn-309.

Expressed by the liver and secreted in plasma.

The protein resides in the secreted. In terms of biological role, might be involved in complement regulation. This chain is Complement factor H-related protein 3 (CFHR3), found in Homo sapiens (Human).